A 591-amino-acid polypeptide reads, in one-letter code: Aspartate--tRNA ligase (591 aa).

E172 serves as a coordination point for L-aspartate. Residues 196–199 (QLFK) are aspartate. R218 lines the L-aspartate pocket. ATP contacts are provided by residues 218–220 (RDE) and Q227. An L-aspartate-binding site is contributed by H449. E483 provides a ligand contact to ATP. Residue R490 coordinates L-aspartate. ATP is bound at residue 535 to 538 (GLDR).

It belongs to the class-II aminoacyl-tRNA synthetase family. Type 1 subfamily. As to quaternary structure, homodimer.

Its subcellular location is the cytoplasm. It catalyses the reaction tRNA(Asp) + L-aspartate + ATP = L-aspartyl-tRNA(Asp) + AMP + diphosphate. Its function is as follows. Catalyzes the attachment of L-aspartate to tRNA(Asp) in a two-step reaction: L-aspartate is first activated by ATP to form Asp-AMP and then transferred to the acceptor end of tRNA(Asp). The protein is Aspartate--tRNA ligase of Actinobacillus pleuropneumoniae serotype 5b (strain L20).